The chain runs to 1052 residues: Error-prone DNA polymerase (1052 aa).

It belongs to the DNA polymerase type-C family. DnaE2 subfamily.

It is found in the cytoplasm. It catalyses the reaction DNA(n) + a 2'-deoxyribonucleoside 5'-triphosphate = DNA(n+1) + diphosphate. Its function is as follows. DNA polymerase involved in damage-induced mutagenesis and translesion synthesis (TLS). It is not the major replicative DNA polymerase. This chain is Error-prone DNA polymerase, found in Bordetella bronchiseptica (strain ATCC BAA-588 / NCTC 13252 / RB50) (Alcaligenes bronchisepticus).